The primary structure comprises 236 residues: Demethylmenaquinone methyltransferase (236 aa).

Residues Thr58, Asp79, and 106–107 (NA) each bind S-adenosyl-L-methionine.

It belongs to the class I-like SAM-binding methyltransferase superfamily. MenG/UbiE family.

It catalyses the reaction a 2-demethylmenaquinol + S-adenosyl-L-methionine = a menaquinol + S-adenosyl-L-homocysteine + H(+). The protein operates within quinol/quinone metabolism; menaquinone biosynthesis; menaquinol from 1,4-dihydroxy-2-naphthoate: step 2/2. Functionally, methyltransferase required for the conversion of demethylmenaquinol (DMKH2) to menaquinol (MKH2). In Alkalihalophilus pseudofirmus (strain ATCC BAA-2126 / JCM 17055 / OF4) (Bacillus pseudofirmus), this protein is Demethylmenaquinone methyltransferase.